Consider the following 100-residue polypeptide: Co-chaperonin GroES (100 aa).

It belongs to the GroES chaperonin family. As to quaternary structure, heptamer of 7 subunits arranged in a ring. Interacts with the chaperonin GroEL.

The protein resides in the cytoplasm. In terms of biological role, together with the chaperonin GroEL, plays an essential role in assisting protein folding. The GroEL-GroES system forms a nano-cage that allows encapsulation of the non-native substrate proteins and provides a physical environment optimized to promote and accelerate protein folding. GroES binds to the apical surface of the GroEL ring, thereby capping the opening of the GroEL channel. The protein is Co-chaperonin GroES of Mycolicibacterium vanbaalenii (strain DSM 7251 / JCM 13017 / BCRC 16820 / KCTC 9966 / NRRL B-24157 / PYR-1) (Mycobacterium vanbaalenii).